Here is a 185-residue protein sequence, read N- to C-terminus: Elongation factor P (185 aa).

It belongs to the elongation factor P family.

The protein resides in the cytoplasm. It participates in protein biosynthesis; polypeptide chain elongation. Involved in peptide bond synthesis. Stimulates efficient translation and peptide-bond synthesis on native or reconstituted 70S ribosomes in vitro. Probably functions indirectly by altering the affinity of the ribosome for aminoacyl-tRNA, thus increasing their reactivity as acceptors for peptidyl transferase. This is Elongation factor P from Salinispora arenicola (strain CNS-205).